The following is a 57-amino-acid chain: uncharacterized protein (57 aa).

Transmembrane regions (helical) follow at residues V4 to W26 and A33 to L55.

The protein resides in the cell membrane. This is an uncharacterized protein from Methanocaldococcus jannaschii (strain ATCC 43067 / DSM 2661 / JAL-1 / JCM 10045 / NBRC 100440) (Methanococcus jannaschii).